The primary structure comprises 86 residues: Small ribosomal subunit protein bS20 (86 aa).

Residues 1–23 form a disordered region; that stretch reads MANIKSSKKDSIKSRKKKKLNAS.

Belongs to the bacterial ribosomal protein bS20 family.

Functionally, binds directly to 16S ribosomal RNA. The chain is Small ribosomal subunit protein bS20 from Buchnera aphidicola subsp. Baizongia pistaciae (strain Bp).